Reading from the N-terminus, the 229-residue chain is Uracil-DNA glycosylase (229 aa).

The active-site Proton acceptor is the D70.

The protein belongs to the uracil-DNA glycosylase (UDG) superfamily. UNG family.

The protein localises to the cytoplasm. It carries out the reaction Hydrolyzes single-stranded DNA or mismatched double-stranded DNA and polynucleotides, releasing free uracil.. Its function is as follows. Excises uracil residues from the DNA which can arise as a result of misincorporation of dUMP residues by DNA polymerase or due to deamination of cytosine. This Chlamydia felis (strain Fe/C-56) (Chlamydophila felis) protein is Uracil-DNA glycosylase.